The primary structure comprises 197 residues: Recombination protein RecR (197 aa).

The segment at 55–70 (CVQCRDFTESEICTIC) adopts a C4-type zinc-finger fold. Residues 78–173 (QQLCVVESPA…RPSRLAQGMP (96 aa)) form the Toprim domain.

Belongs to the RecR family.

Functionally, may play a role in DNA repair. It seems to be involved in an RecBC-independent recombinational process of DNA repair. It may act with RecF and RecO. The chain is Recombination protein RecR from Xanthomonas euvesicatoria pv. vesicatoria (strain 85-10) (Xanthomonas campestris pv. vesicatoria).